Reading from the N-terminus, the 248-residue chain is Gas vesicle protein J (248 aa).

The stretch at 121–140 (DVKDDLYQTSAKIPSPVDTP) is one 1; truncated repeat. Positions 121 to 245 (DVKDDLYQTS…EEIPSSVDPA (125 aa)) are 6 X 21 AA approximate tandem repeats. 5 consecutive repeat copies span residues 141 to 161 (IEVLDFQAQSSGGTPPYVNTS), 162 to 182 (MEILDFQAQTSAESSSPVGST), 183 to 203 (VEILDFQAQTSEESSSPVVST), 204 to 224 (VEILDFQAQTSEESSSPVGST), and 225 to 245 (VEILDFQAQTSEEIPSSVDPA).

It belongs to the gas vesicle GvpA family. Interacts with GvpA.

It localises to the gas vesicle. Functionally, a minor component of the gas vesicle, might be involved in nucleating gas vesicle formation. Gas vesicles (GV) are hollow, gas filled proteinaceous nanostructures. During planktonic growth they allow positioning of the organism at a favorable depth for light or nutrient acquisition. This is Gas vesicle protein J from Dolichospermum flosaquae (Anabaena flos-aquae).